We begin with the raw amino-acid sequence, 204 residues long: Ribosome maturation factor RimM (204 aa).

The region spanning 117-192 is the PRC barrel domain; it reads DEDEFFSADL…EVTIDPPDDL (76 aa).

Belongs to the RimM family. Binds ribosomal protein uS19.

The protein resides in the cytoplasm. In terms of biological role, an accessory protein needed during the final step in the assembly of 30S ribosomal subunit, possibly for assembly of the head region. Essential for efficient processing of 16S rRNA. May be needed both before and after RbfA during the maturation of 16S rRNA. It has affinity for free ribosomal 30S subunits but not for 70S ribosomes. This Methylobacterium nodulans (strain LMG 21967 / CNCM I-2342 / ORS 2060) protein is Ribosome maturation factor RimM.